Consider the following 1177-residue polypeptide: MTDSEHAGHDREDGELEDGEIDDAGFEETQDQEAKENEKQKNEKAYRKSRKKHKKEREKKKSKRRKHEKHKHNSPSGDDSSDYSLDSDVERMQSSRKKRTSSYRDYDVPFSQHRRISGSYMTSKKSQHNKKTNSKEYAESSFYSDDYFGNYSDDNFGNYSNQEGEEDFSSQLKYYRQSQESSGSSFSKESGKKLRSKGSPPGTEYRIKSFDVSHGHLLPKKIRRKEHCGARVIKGPYVFSGMDDFQEYSKPGKKWKVMTQEFINQHTVEHKGKQICKYFLEGRCIKGDHCKFNHDAELEKKKEVCKYYLQGYCTKGENCIYMHSEFPCKFYHSGAKCYQGDKCKFSHDDLTKETRKLLDKVLNADEELVNEDERELEELRKRGITPLPKPPPGVGLLPTPSEHFPFSDPEDDFETDLSDDMKKIPSLFEIVVKPTVDLAHKIGKKPPAFYNSTSPPGPQFEESSHCPQRMYSSESSPGPGSKVPQGCESPVRHPGSPGHHPCVGPPGPPMQENPSLLPSSSEIVGPHSQAGGLVQLDTLPSMGGAYHSPGFPGHSVKVPRESHSSPASLYQQMPSEMQRSADSESMQGSAEFYDDYYPQHAAHNFQPPDNSADEMWHEEFAQQQPPIARDTAHLGSGPNSSSRMTSHCPLSASGLPPAVQRALFIPLTQRYQEDEEPAGTQPHRASSKEEDDTANWYSSSEEEEGSGVKSILRTLQKQTGTLRNQQLPPTELSVPTDPRLAKEKRKRNQVVDPRLRTVPRQDIKKPHESVPVDLRLVWDPKKLRGNGGAPGGSSARGAEFDLRHTNAGANHKSKRREDDDEDSERELREKAFLIPLDSSPGIVLQDPRSQLRQFSHIKMDIILNKPNFAKHIVWAPEDLLPVPLPKPDPVSSINLPLPPLIADQRLNRLWNTKSDHQGALSLDPTSAAKAKLSLTHREGCLEQSGDLHSSGGKLGDPRLQKNFDPRLHRLPNTESHQVTAKDSHSSRSALPLARWNPALSQPSTAAPINVASVTPPLYAPKLSSEGLPPGTSSSVLSGISLYDPRDKGSLSATELSTISSGENTESQKKSGLKNSDKNQPSPGEVTVPQNTTADMEVPVDGPVDMQTDILRSADKVQVPAVHSLPIQALTGLLRPPYSDPRQAREPGQASPTPDEETDDKPLKEVFKTFDPTASPFC.

The span at 1–12 (MTDSEHAGHDRE) shows a compositional bias: basic and acidic residues. Disordered stretches follow at residues 1-137 (MTDS…SKEY) and 179-206 (QESS…TEYR). Over residues 13–31 (DGELEDGEIDDAGFEETQD) the composition is skewed to acidic residues. A coiled-coil region spans residues 27 to 73 (EETQDQEAKENEKQKNEKAYRKSRKKHKKEREKKKSKRRKHEKHKHN). Basic and acidic residues predominate over residues 32–46 (QEAKENEKQKNEKAY). Positions 47-73 (RKSRKKHKKEREKKKSKRRKHEKHKHN) are enriched in basic residues. Low complexity predominate over residues 179 to 188 (QESSGSSFSK). 3 consecutive C3H1-type zinc fingers follow at residues 271 to 297 (KGKQ…HDAE), 299 to 326 (EKKK…HSEF), and 327 to 350 (PCKF…HDDL). A coiled-coil region spans residues 347–383 (HDDLTKETRKLLDKVLNADEELVNEDERELEELRKRG). 8 disordered regions span residues 383 to 416 (GITP…FETD), 446 to 587 (PPAF…ESMQ), 622 to 654 (QQQP…SASG), 670 to 767 (RYQE…KKPH), 780 to 826 (PKKL…SERE), 942 to 988 (EQSG…SSRS), 1043 to 1101 (DPRD…PVDG), and 1132 to 1162 (LLRP…DKPL). The span at 493–502 (HPGSPGHHPC) shows a compositional bias: low complexity. Composition is skewed to polar residues over residues 512-522 (ENPSLLPSSSE) and 564-587 (SSPA…ESMQ). Over residues 713 to 728 (RTLQKQTGTLRNQQLP) the composition is skewed to polar residues. A compositionally biased stretch (basic and acidic residues) spans 753 to 767 (PRLRTVPRQDIKKPH). Over residues 955 to 967 (GDPRLQKNFDPRL) the composition is skewed to basic and acidic residues. 2 stretches are compositionally biased toward polar residues: residues 1050–1064 (LSAT…GENT) and 1077–1093 (KNQP…NTTA). Position 1150 is a phosphoserine (Ser-1150).

The chain is Zinc finger CCCH domain-containing protein 6 (Zc3h6) from Mus musculus (Mouse).